A 293-amino-acid chain; its full sequence is Putative ribose uptake protein RbsU (293 aa).

The next 10 helical transmembrane spans lie at 2 to 24 (SIVALLIGLGPLIGWGFFPTVAS), 34 to 56 (IIGATVGTLIFAIILAVVTSSGF), 63 to 80 (LFALLSGAGWGFGQIITF), 95 to 117 (TTAFQLLGASLWGVFALGNWPGI), 122 to 139 (IGFTALVVILIGARMTVW), 154 to 171 (AVVLLLIGEFGYWLYSAA), 180 to 202 (LTAFLPQAMGMVIVAVIYGFMNM), 212 to 234 (ITWLQIISGFFFAFGALTYLISA), 241 to 263 (LATGFILSQTSVVLATLTGIYFL), and 273 to 292 (VITIIGLVLILVAASVTVFI).

It belongs to the GRP transporter (TC 2.A.7.5) family.

Its subcellular location is the cell membrane. Its function is as follows. Could be involved in the uptake of ribose. In Staphylococcus aureus (strain Mu50 / ATCC 700699), this protein is Putative ribose uptake protein RbsU (rbsU).